The primary structure comprises 242 residues: Protein GrpE (242 aa).

The span at 1–10 (MAGENSSTET) shows a compositional bias: polar residues. A disordered region spans residues 1-64 (MAGENSSTET…QSTESTSKEK (64 aa)). The span at 11 to 20 (KNQEINEKTP) shows a compositional bias: basic and acidic residues. Composition is skewed to polar residues over residues 21-32 (EVQTFETNVEFE) and 40-59 (DTEL…STES).

The protein belongs to the GrpE family. In terms of assembly, homodimer.

It is found in the cytoplasm. Functionally, participates actively in the response to hyperosmotic and heat shock by preventing the aggregation of stress-denatured proteins, in association with DnaK and GrpE. It is the nucleotide exchange factor for DnaK and may function as a thermosensor. Unfolded proteins bind initially to DnaJ; upon interaction with the DnaJ-bound protein, DnaK hydrolyzes its bound ATP, resulting in the formation of a stable complex. GrpE releases ADP from DnaK; ATP binding to DnaK triggers the release of the substrate protein, thus completing the reaction cycle. Several rounds of ATP-dependent interactions between DnaJ, DnaK and GrpE are required for fully efficient folding. The protein is Protein GrpE of Trichodesmium erythraeum (strain IMS101).